Reading from the N-terminus, the 410-residue chain is Divergent protein kinase domain 1C (410 aa).

The Cytoplasmic portion of the chain corresponds to 1 to 19 (MARAAGERGRAARCGRWRR). A May mediate ER retention motif is present at residues 18-19 (RR). Residues 20 to 40 (GALLAFAAWTAGWVLAAALLL) form a helical membrane-spanning segment. Topologically, residues 41 to 410 (RAHPSVLSER…TLKELQEAEK (370 aa)) are lumenal.

Belongs to the DIPK family. Post-translationally, among the many cysteines in the lumenal domain, most are probably involved in disulfide bonds. In terms of tissue distribution, mainly expressed in the brain and eye, some expression in kidney and skeletal muscle.

Its subcellular location is the endoplasmic reticulum membrane. In Mus musculus (Mouse), this protein is Divergent protein kinase domain 1C (Dipk1c).